The following is a 341-amino-acid chain: RNA 3'-terminal phosphate cyclase (341 aa).

ATP contacts are provided by residues Q100 and 283–287 (FLGDQ). The Tele-AMP-histidine intermediate role is filled by H307.

It belongs to the RNA 3'-terminal cyclase family. Type 1 subfamily.

It localises to the cytoplasm. The catalysed reaction is a 3'-end 3'-phospho-ribonucleotide-RNA + ATP = a 3'-end 2',3'-cyclophospho-ribonucleotide-RNA + AMP + diphosphate. Catalyzes the conversion of 3'-phosphate to a 2',3'-cyclic phosphodiester at the end of RNA. The mechanism of action of the enzyme occurs in 3 steps: (A) adenylation of the enzyme by ATP; (B) transfer of adenylate to an RNA-N3'P to produce RNA-N3'PP5'A; (C) and attack of the adjacent 2'-hydroxyl on the 3'-phosphorus in the diester linkage to produce the cyclic end product. The biological role of this enzyme is unknown but it is likely to function in some aspects of cellular RNA processing. The polypeptide is RNA 3'-terminal phosphate cyclase (rtcA) (Pyrococcus horikoshii (strain ATCC 700860 / DSM 12428 / JCM 9974 / NBRC 100139 / OT-3)).